The sequence spans 2078 residues: Nascent polypeptide-associated complex subunit alpha, muscle-specific form (2078 aa).

Disordered stretches follow at residues 1 to 21 (MPGEATETVPATEQELPQPQA), 37 to 96 (ALGQ…LGTA), 595 to 614 (LGEPLPIGKPASSMTSPLGV), and 732 to 1944 (KSVP…KAMS). Polar residues-rich tracts occupy residues 9 to 21 (VPATEQELPQPQA) and 60 to 75 (AANQASPFPSPSTIAS). Low complexity predominate over residues 775–786 (SGASATASSKGT). The span at 837–847 (PENSLSFQGSK) shows a compositional bias: polar residues. At serine 917 the chain carries Phosphoserine. Residues 933-1020 (SPSPKGAPTP…PPAVTPPSPK (88 aa)) show a composition bias toward pro residues. The segment covering 1045–1067 (GSPAATPLPKGAPTTPAATLPSP) has biased composition (low complexity). Over residues 1080-1113 (PTPPAATPPSPKGGPATPSPKGAPMPPAATPPSP) the composition is skewed to pro residues. The span at 1114 to 1130 (KGGLATPPHKGAPTTPA) shows a compositional bias: low complexity. Composition is skewed to pro residues over residues 1131–1147 (ATPPSPKGGLATPPPKG) and 1154–1170 (ATPPSPKGGLATPPPKG). Serine 1181 carries the post-translational modification Phosphoserine. Low complexity-rich tracts occupy residues 1183-1199 (KGGLATPSPKGAPTTPA), 1206-1222 (KGGLATPSPKGAPTTPA), and 1229-1245 (KGGLATPSPKGAPTTPA). Composition is skewed to pro residues over residues 1246-1270 (ATPPSPKGGPATPPPKGAPTPPAAT) and 1292-1344 (VTPP…PSPK). Residues 1345–1366 (GTPTLPATTPSSKGGPTTPSSK) are compositionally biased toward low complexity. Serine 1397 and serine 1474 each carry phosphoserine. Residues 1470–1481 (VTPPSPKEPPAP) show a composition bias toward pro residues. Over residues 1485–1507 (ATSSSPKKAPATPAPMGAPTLPA) the composition is skewed to low complexity. Positions 1611–1625 (KEAPTPPAVTPPSPE) are enriched in pro residues. Residues 1626 to 1637 (KGPATPAPKGTP) are compositionally biased toward low complexity. Positions 1647–1656 (LKDSPTSPAS) are enriched in polar residues. Residues 1744-1756 (DSSKTAKGKDASH) are compositionally biased toward basic and acidic residues. The span at 1794–1811 (PSPPVSLPLAPSPVPTLP) shows a compositional bias: pro residues. A PXLXP motif is present at residues 1841–1845 (LPLIP). The span at 1876-1891 (SAKQPVTKNNKGSGTE) shows a compositional bias: polar residues. Residues 1892 to 1905 (SDSDESVPELEEQD) are compositionally biased toward acidic residues. The residue at position 1906 (serine 1906) is a Phosphoserine; by ILK1. Residues 1907–1920 (TQATTQQAQLAAAA) show a composition bias toward low complexity. The required for DNA-binding stretch occupies residues 1932 to 1943 (QSRSEKKARKAM). The region spanning 1933-1998 (SRSEKKARKA…AKIEDLSQQA (66 aa)) is the NAC-A/B domain. Position 1995 is a phosphoserine (serine 1995). Lysine 2005 is subject to N6-acetyllysine; alternate. Lysine 2005 is covalently cross-linked (Glycyl lysine isopeptide (Lys-Gly) (interchain with G-Cter in SUMO2); alternate). A Phosphothreonine; by GSK3-beta modification is found at threonine 2022. Residue threonine 2024 is modified to Phosphothreonine. Residues serine 2029, serine 2049, serine 2054, and serine 2066 each carry the phosphoserine modification. A UBA domain is found at 2039–2078 (VEVKDIELVMSQANVSRAKAVRALKNNSNDIVNAIMELTM).

In terms of assembly, interacts (via PXLXP motif) with the muscle-restricted histone methyltransferase SMYD1 (via MYND-type zinc finger).

The protein localises to the cytoplasm. It is found in the nucleus. In terms of biological role, cardiac- and muscle-specific transcription factor. May act to regulate the expression of genes involved in the development of myotubes. Plays a critical role in ventricular cardiomyocyte expansion and regulates postnatal skeletal muscle growth and regeneration. Involved in the organized assembly of thick and thin filaments of myofibril sarcomeres. This is Nascent polypeptide-associated complex subunit alpha, muscle-specific form (NACA) from Homo sapiens (Human).